Reading from the N-terminus, the 210-residue chain is Protein VNG_2543C (210 aa).

The 195-residue stretch at 12 to 206 (EDGARTVELA…ETGDEDDPVE (195 aa)) folds into the AMMECR1 domain.

The chain is Protein VNG_2543C from Halobacterium salinarum (strain ATCC 700922 / JCM 11081 / NRC-1) (Halobacterium halobium).